The following is a 130-amino-acid chain: Protein ApaG (130 aa).

Residues 3–127 (RAVTRQIEVL…FSLDSPDIRR (125 aa)) enclose the ApaG domain.

This chain is Protein ApaG, found in Afipia carboxidovorans (strain ATCC 49405 / DSM 1227 / KCTC 32145 / OM5) (Oligotropha carboxidovorans).